Here is a 249-residue protein sequence, read N- to C-terminus: U1 small nuclear ribonucleoprotein usp102 (249 aa).

The interval 1-25 (MDPQTNSHQEVQQPSPKETDSQTPS) is disordered. The region spanning 26 to 105 (ETLYIRNIEE…KPMMIQYSKS (80 aa)) is the RRM 1 domain. Positions 113–157 (RESPEEIETRKKDRKNRREMLKRTSALQPAAPKPTHKKPVPKRNV) are disordered. Positions 114–134 (ESPEEIETRKKDRKNRREMLK) are enriched in basic and acidic residues. One can recognise an RRM 2 domain in the interval 174 to 247 (KVLLLQNIPQ…NQIKVTFARK (74 aa)).

It belongs to the RRM U1 A/B'' family. As to quaternary structure, component of the spliceosome where it is associated with snRNP U1.

The protein localises to the nucleus. Its subcellular location is the nucleolus. Its function is as follows. Involved in nuclear mRNA splicing. In Schizosaccharomyces pombe (strain 972 / ATCC 24843) (Fission yeast), this protein is U1 small nuclear ribonucleoprotein usp102.